A 487-amino-acid polypeptide reads, in one-letter code: N-succinylglutamate 5-semialdehyde dehydrogenase (487 aa).

Residues 1-23 form a disordered region; it reads MTHFIKGQWQAGKGHDVTSSNPA. Position 220–225 (220–225) interacts with NAD(+); the sequence is GSSRTG. Catalysis depends on residues E243 and C277.

It belongs to the aldehyde dehydrogenase family. AstD subfamily.

It carries out the reaction N-succinyl-L-glutamate 5-semialdehyde + NAD(+) + H2O = N-succinyl-L-glutamate + NADH + 2 H(+). The protein operates within amino-acid degradation; L-arginine degradation via AST pathway; L-glutamate and succinate from L-arginine: step 4/5. Functionally, catalyzes the NAD-dependent reduction of succinylglutamate semialdehyde into succinylglutamate. This Shewanella sp. (strain ANA-3) protein is N-succinylglutamate 5-semialdehyde dehydrogenase.